The following is a 418-amino-acid chain: MNKFIIKGGETLNGEVDISCAKNSVLPIIAATILCGEKCTIKNCPMLLDVFVISDLLKSIGAQVDIDLNSGDMKIDTSNVKSIEPDAELVRKMRGSFLIMGPMISRYGRFKISLPGGCNIGTRPIDLHLKGLKALGVNIEIGHGYVEANAAKLLGDRIYLDFPSVGATENIIMASVFAEGETIIENAAQEPEIDDLINFLNKMGSDIKKIETGAIIIRGVKELKGIKYTPIYDRIEAGTFIIAAAITKSKIKINGVEEKSIKPMIAKFCEMGINMEIDGKSLIIDGRNELKPVDIKTMPYPGFPTDMQAQIMSLLCCTEGTSVITETIFENRFMHVPELKRFGANIKIDGRSAVIVGVKELTGCSARATDLRAGAALILAGLVAEGETQISDIYHVDRGYVSIEKKLTKLGAKIERVE.

Position 22 to 23 (22 to 23 (KN)) interacts with phosphoenolpyruvate. Residue R94 participates in UDP-N-acetyl-alpha-D-glucosamine binding. The active-site Proton donor is C118. C118 is modified (2-(S-cysteinyl)pyruvic acid O-phosphothioketal). UDP-N-acetyl-alpha-D-glucosamine-binding positions include 123-127 (RPIDL), D306, and I328.

The protein belongs to the EPSP synthase family. MurA subfamily.

The protein localises to the cytoplasm. The enzyme catalyses phosphoenolpyruvate + UDP-N-acetyl-alpha-D-glucosamine = UDP-N-acetyl-3-O-(1-carboxyvinyl)-alpha-D-glucosamine + phosphate. Its pathway is cell wall biogenesis; peptidoglycan biosynthesis. Its function is as follows. Cell wall formation. Adds enolpyruvyl to UDP-N-acetylglucosamine. The sequence is that of UDP-N-acetylglucosamine 1-carboxyvinyltransferase 1 from Clostridium acetobutylicum (strain ATCC 824 / DSM 792 / JCM 1419 / IAM 19013 / LMG 5710 / NBRC 13948 / NRRL B-527 / VKM B-1787 / 2291 / W).